A 397-amino-acid polypeptide reads, in one-letter code: Transaldolase (397 aa).

Lys-136 (schiff-base intermediate with substrate) is an active-site residue.

The protein belongs to the transaldolase family. Type 1 subfamily. Homodimer.

Its subcellular location is the cytoplasm. It catalyses the reaction D-sedoheptulose 7-phosphate + D-glyceraldehyde 3-phosphate = D-erythrose 4-phosphate + beta-D-fructose 6-phosphate. It functions in the pathway carbohydrate degradation; pentose phosphate pathway; D-glyceraldehyde 3-phosphate and beta-D-fructose 6-phosphate from D-ribose 5-phosphate and D-xylulose 5-phosphate (non-oxidative stage): step 2/3. Functionally, transaldolase is important for the balance of metabolites in the pentose-phosphate pathway. This is Transaldolase from Synechococcus sp. (strain ATCC 27144 / PCC 6301 / SAUG 1402/1) (Anacystis nidulans).